The primary structure comprises 251 residues: Cell division protein ZapD (251 aa).

The protein belongs to the ZapD family. Interacts with FtsZ.

The protein localises to the cytoplasm. Functionally, cell division factor that enhances FtsZ-ring assembly. Directly interacts with FtsZ and promotes bundling of FtsZ protofilaments, with a reduction in FtsZ GTPase activity. This Burkholderia ambifaria (strain MC40-6) protein is Cell division protein ZapD.